The chain runs to 385 residues: Heptahelical transmembrane protein 4 (385 aa).

Residues 1 to 12 are compositionally biased toward basic and acidic residues; sequence MGDEAEIKEHLK. The segment at 1–22 is disordered; sequence MGDEAEIKEHLKPQASSETMDK. The Cytoplasmic segment spans residues 1-79; that stretch reads MGDEAEIKEH…LSIFTIHNET (79 aa). A helical transmembrane segment spans residues 80-100; sequence LNVWTHLIGFFLFLALTIYTA. The Extracellular segment spans residues 101-191; the sequence is TKVPSVVDLH…LIFRPITRWP (91 aa). Residues 192 to 212 traverse the membrane as a helical segment; that stretch reads FYAFLGGAMFCLLASSTCHLL. Residues 213-228 lie on the Cytoplasmic side of the membrane; the sequence is SCHSERVSYIMLRLDY. A helical membrane pass occupies residues 229-249; sequence AGIAALIATSFYPPVYYSFMC. Topologically, residues 250 to 256 are extracellular; the sequence is DPFFCNL. Residues 257-277 traverse the membrane as a helical segment; that stretch reads YLGFITILGIATVLVSLLPVF. Over 278 to 288 the chain is Cytoplasmic; sequence QSPEFRVVRAS. Residues 289–309 form a helical membrane-spanning segment; that stretch reads LFFGMGFSGLAPILHKLIIFW. The Extracellular portion of the chain corresponds to 310 to 313; that stretch reads DQPE. The chain crosses the membrane as a helical span at residues 314–334; sequence ALHTTGYEILMGLLYGLGALV. Residues 335–356 are Cytoplasmic-facing; that stretch reads YATRIPERWMPGKFDIAGHSHQ. A helical transmembrane segment spans residues 357-377; it reads LFHVLVVAGAFTHYRAGLVYL.

This sequence belongs to the ADIPOR family. In terms of tissue distribution, expressed in roots, leaves, stems and flowers.

The protein resides in the membrane. In terms of biological role, may play a role in abiotic stress response. The polypeptide is Heptahelical transmembrane protein 4 (HHP4) (Arabidopsis thaliana (Mouse-ear cress)).